We begin with the raw amino-acid sequence, 291 residues long: Pyridoxal kinase PdxY (291 aa).

Residues Ser-9 and 44–45 (TQ) contribute to the substrate site. ATP-binding positions include Asp-112, Val-144, Glu-149, Lys-182, and 207 to 210 (RPHL). Residue Asp-221 participates in substrate binding.

The protein belongs to the pyridoxine kinase family. PdxY subfamily. Homodimer. Mg(2+) is required as a cofactor.

It catalyses the reaction pyridoxal + ATP = pyridoxal 5'-phosphate + ADP + H(+). It participates in cofactor metabolism; pyridoxal 5'-phosphate salvage; pyridoxal 5'-phosphate from pyridoxal: step 1/1. In terms of biological role, pyridoxal kinase involved in the salvage pathway of pyridoxal 5'-phosphate (PLP). Catalyzes the phosphorylation of pyridoxal to PLP. The chain is Pyridoxal kinase PdxY from Photobacterium profundum (strain SS9).